The primary structure comprises 448 residues: MAQPFVLLPTEDSHQTLRIQPPSTGIGLRGRIRVPGDKSISHRALMLGAIASGETTIEGLLLGEDPLSTAACFRAMGAEISELNSELVRVKGIGLQNLQEPLDVLNAGNSGTTIRLMMGLLAGQRDRFFCVTGDESLRSRPMARVIQPLSQMGAEIRGRQGNTRAPLAISGRSLQPIRYVSPIASAQVKSSILLAGLTCEGQTTVVEPALSRDHSERMFRAFGAKLTVNPEEISVTVEGPAELTGQPVVVPGDISSAAFWLVAAAIVPDSDLLIENVGVNPTRTGILEALQQMEAQITLENERIVAGEPVADLRVRSSNLQAIEIGGSLIPRLIDEVPILAVAAAFAKGTTIIRDAEELRVKESDRIAVMASELGRMGATISERPDGLEITGGAALTGATVDSYTDHRIAMSLAIAALQAKGQTQIQQAEAAAVSYPDFVPTLQQLLG.

Positions 38, 39, and 43 each coordinate 3-phosphoshikimate. Residue lysine 38 coordinates phosphoenolpyruvate. The phosphoenolpyruvate site is built by glycine 111 and arginine 140. 3-phosphoshikimate contacts are provided by serine 185, glutamine 187, aspartate 335, and lysine 362. Glutamine 187 is a binding site for phosphoenolpyruvate. Aspartate 335 functions as the Proton acceptor in the catalytic mechanism. Phosphoenolpyruvate is bound by residues arginine 366 and arginine 408.

The protein belongs to the EPSP synthase family. Monomer.

It localises to the cytoplasm. The enzyme catalyses 3-phosphoshikimate + phosphoenolpyruvate = 5-O-(1-carboxyvinyl)-3-phosphoshikimate + phosphate. Its pathway is metabolic intermediate biosynthesis; chorismate biosynthesis; chorismate from D-erythrose 4-phosphate and phosphoenolpyruvate: step 6/7. In terms of biological role, catalyzes the transfer of the enolpyruvyl moiety of phosphoenolpyruvate (PEP) to the 5-hydroxyl of shikimate-3-phosphate (S3P) to produce enolpyruvyl shikimate-3-phosphate and inorganic phosphate. The sequence is that of 3-phosphoshikimate 1-carboxyvinyltransferase from Synechococcus elongatus (strain ATCC 33912 / PCC 7942 / FACHB-805) (Anacystis nidulans R2).